Reading from the N-terminus, the 717-residue chain is Photosystem I P700 chlorophyll a apoprotein A1 (717 aa).

8 helical membrane passes run 59-82 (VFRA…FHGA), 145-168 (LYCT…FHYH), 184-208 (LNHH…HVSL), 280-298 (TAHH…GHMY), 335-358 (WHAQ…HHMY), 374-400 (LSLF…IFMV), 422-444 (AIVS…LYIH), and 520-538 (FLVH…LILL). [4Fe-4S] cluster contacts are provided by C562 and C571. Helical transmembrane passes span 578–599 (HVFL…HFSW) and 653–675 (LSAY…MFLF). H664 is a binding site for chlorophyll a'. The chlorophyll a site is built by M672 and Y680. Residue W681 coordinates phylloquinone. The chain crosses the membrane as a helical span at residues 713 to 717 (AVGVA).

It belongs to the PsaA/PsaB family. In terms of assembly, the PsaA/B heterodimer binds the P700 chlorophyll special pair and subsequent electron acceptors. PSI consists of a core antenna complex that captures photons, and an electron transfer chain that converts photonic excitation into a charge separation. The eukaryotic PSI reaction center is composed of at least 11 subunits. P700 is a chlorophyll a/chlorophyll a' dimer, A0 is one or more chlorophyll a, A1 is one or both phylloquinones and FX is a shared 4Fe-4S iron-sulfur center. serves as cofactor.

It is found in the plastid. The protein localises to the chloroplast thylakoid membrane. The catalysed reaction is reduced [plastocyanin] + hnu + oxidized [2Fe-2S]-[ferredoxin] = oxidized [plastocyanin] + reduced [2Fe-2S]-[ferredoxin]. PsaA and PsaB bind P700, the primary electron donor of photosystem I (PSI), as well as the electron acceptors A0, A1 and FX. PSI is a plastocyanin-ferredoxin oxidoreductase, converting photonic excitation into a charge separation, which transfers an electron from the donor P700 chlorophyll pair to the spectroscopically characterized acceptors A0, A1, FX, FA and FB in turn. Oxidized P700 is reduced on the lumenal side of the thylakoid membrane by plastocyanin. The protein is Photosystem I P700 chlorophyll a apoprotein A1 of Cycas revoluta (Sago palm).